The following is a 701-amino-acid chain: KKVLSFSHSLNTYEGTGVPEKIYNEEKNNGKFRLLGLYGNNSTNWLITDCACMISGVTTLVMHSKFSIDIIIDILNNTKLEWLCLDLDLVEGLLCRKNELPYLKKLIILDNLTKRSEMKIENEEKSNGSRKSSNKQKYNESDKREDISLCALECDKEKIEKINSLKEKAKTLGLSIIVFDNMTENKIANVTVQNEDPNFIASIVYTSGTSGKPKGVMLSNRNLYNGVIPPCDCNIIKKYPLTTHLSYLPVSHIYERVIFFIALFLGVKINIWSRDIKFLNTDICNSKAEIILGVPKVFNRMYATIMTKINNLSRCKKWIAKQAINLRKGKNNGNFSKVVEGITNISRKIKDKINPNMDVILNGGGKLSPEVAEGLSVLLNVKYYQGYGLTESTGPIFLQDVDDCNTESMGVAVSPSTRYKVRTWEIYKATDTIPKGELLIKSDSMFSGYFLEKESTEHAFTNDGYFKTGDIVQINDNGSLTFLDRSKGLVKLSQGEYIETEMINNLYSQIPFVNFCVAYGDDSMDGPLGIISVDKHKLFTFLKNDNMLKTTGVDEKNFSEKLIDETLNDPIYVDYVKGKMMEIYKKTNLNRYNVINDIYLTSKPWDTTNYLTPTLKIRRFNVFKDFSFFIDEVKKKYEEKLSGSSTGSMNNGKSGSKSDIKGGSKDDIKSGSKDDIKSGSKADIKSGSKDDIKSGSKDHIK.

Residues Asn-40, Asn-41, Asn-76, Asn-111, Asn-127, Asn-139, Asn-181, Asn-189, Asn-311, Asn-334, Asn-344, Asn-477, and Asn-557 are each glycosylated (N-linked (GlcNAc...) asparagine). The interval 120–140 is disordered; it reads IENEEKSNGSRKSSNKQKYNE. Residues 641 to 701 form a disordered region; that stretch reads LSGSSTGSMN…IKSGSKDHIK (61 aa). Low complexity predominate over residues 642-655; the sequence is SGSSTGSMNNGKSG. 6 tandem repeats follow at residues 653–660, 661–668, 669–676, 677–684, 685–692, and 693–700. Positions 653-700 are 6 X 8 AA approximate tandem repeats; sequence KSGSKSDIKGGSKDDIKSGSKDDIKSGSKADIKSGSKDDIKSGSKDHI. Over residues 656-701 the composition is skewed to basic and acidic residues; the sequence is SKSDIKGGSKDDIKSGSKDDIKSGSKADIKSGSKDDIKSGSKDHIK.

The protein belongs to the ATP-dependent AMP-binding enzyme family.

Its subcellular location is the parasitophorous vacuole. The sequence is that of Octapeptide-repeat antigen from Plasmodium falciparum (isolate NF7 / Ghana).